A 257-amino-acid polypeptide reads, in one-letter code: Global transcriptional regulator CodY (257 aa).

Residues 1–155 (MSLLSKTREL…AATVIGMEIL (155 aa)) form a GAF domain region. Positions 203-222 (ASKVADRVGITRSVIVNALR) form a DNA-binding region, H-T-H motif.

Belongs to the CodY family.

It localises to the cytoplasm. In terms of biological role, DNA-binding global transcriptional regulator which is involved in the adaptive response to starvation and acts by directly or indirectly controlling the expression of numerous genes in response to nutrient availability. During rapid exponential growth, CodY is highly active and represses genes whose products allow adaptation to nutrient depletion. The protein is Global transcriptional regulator CodY of Staphylococcus saprophyticus subsp. saprophyticus (strain ATCC 15305 / DSM 20229 / NCIMB 8711 / NCTC 7292 / S-41).